The sequence spans 69 residues: Putative membrane protein insertion efficiency factor (69 aa).

It belongs to the UPF0161 family.

The protein resides in the cell membrane. Could be involved in insertion of integral membrane proteins into the membrane. This is Putative membrane protein insertion efficiency factor from Clostridium botulinum (strain 657 / Type Ba4).